Reading from the N-terminus, the 513-residue chain is Leucine-rich repeat-containing protein 24 (513 aa).

Positions 1–20 are cleaved as a signal peptide; it reads MALRAPALLPLLLLLLPLRA. Residues 21–50 form the LRRNT domain; it reads AGCPAACRCYSATVECGALRLRVVPLGIPP. 6 LRR repeats span residues 51–72, 75–96, 99–120, 123–144, 147–168, and 171–192; these read GTQT…ALAP, ALRR…AFRA, RLLE…AFVG, QLRV…TFLH, RLQE…ALAG, and SLAL…ALQP. Residues 204-259 enclose the LRRCT domain; the sequence is NPWRCDCALHWLGAWIKEGGQRLLTSRDRKIMCAEPPRLALQSLLDVSHSSLICIP. The 102-residue stretch at 260 to 361 folds into the Ig-like C2-type domain; sequence PSVHVQPLEL…GAARVPFRLL (102 aa). A disulfide bond links cysteine 281 and cysteine 345. 2 N-linked (GlcNAc...) asparagine glycosylation sites follow: asparagine 334 and asparagine 363. The disordered stretch occupies residues 365-391; it reads SRQQPQQPAQPPPPAARPAGSEPRPEA. The helical transmembrane segment at 406–426 threads the bilayer; sequence AIAAAIALLALTALLLVAMIC.

Its subcellular location is the membrane. In Homo sapiens (Human), this protein is Leucine-rich repeat-containing protein 24 (LRRC24).